The chain runs to 176 residues: MARPDKAAAVAELADQFRSSNAAVLTEYRGLTVAQLKTLRRSLGEDAQYAVVKNTLTKIAANEAGINTLDDLFNGPTAVAFITGDPVVSAKGLRDFAKDNPNLVIKGGVLDGKALSADEIKKLADLESREVLLAKLAGAFKGKQSQAASLFQALPSKFVRTAEALRAKKAEQGGAE.

The protein belongs to the universal ribosomal protein uL10 family. In terms of assembly, part of the ribosomal stalk of the 50S ribosomal subunit. The N-terminus interacts with L11 and the large rRNA to form the base of the stalk. The C-terminus forms an elongated spine to which L12 dimers bind in a sequential fashion forming a multimeric L10(L12)X complex.

Functionally, forms part of the ribosomal stalk, playing a central role in the interaction of the ribosome with GTP-bound translation factors. This chain is Large ribosomal subunit protein uL10, found in Streptomyces avermitilis (strain ATCC 31267 / DSM 46492 / JCM 5070 / NBRC 14893 / NCIMB 12804 / NRRL 8165 / MA-4680).